The chain runs to 1022 residues: Sodium/potassium-transporting ATPase subunit alpha-1 (1022 aa).

Residues 1–5 (MGRGT) constitute a propeptide that is removed on maturation. Basic and acidic residues predominate over residues 1 to 10 (MGRGTGHDQY). Residues 1–34 (MGRGTGHDQYELAATSEGGRKKKRDKKKKDMDDL) form a disordered region. Residues 6-86 (GHDQYELAAT…NALTPPPTTP (81 aa)) are Cytoplasmic-facing. Residue Ser16 is modified to Phosphoserine; by PKC. Positions 81 to 83 (PPP) are interaction with phosphoinositide-3 kinase. Residues 87-107 (EWVKFCRQLFGGFSMLLWIGA) form a helical membrane-spanning segment. The Extracellular segment spans residues 108–130 (ILCFLAYGIQAASEDEPANDNLY). Residues 131–151 (LGVVLSAVVIITGCFSYYQEA) traverse the membrane as a helical segment. The Cytoplasmic portion of the chain corresponds to 152-287 (KSSRIMDSFK…VGRTPISIEI (136 aa)). The tract at residues 213–234 (DNSSLTGESEPQTRSPDFSNEN) is disordered. The chain crosses the membrane as a helical span at residues 288 to 307 (EHFIHIITGVAVFLGVSFFI). Over 308–319 (LSLILGYAWLEA) the chain is Extracellular. The helical transmembrane segment at 320–337 (VIFLIGIIVANVPEGLLA) threads the bilayer. Residues 338–771 (TVTVCLTLTA…EEGRLIFDNL (434 aa)) are Cytoplasmic-facing. Catalysis depends on Asp375, which acts as the 4-aspartylphosphate intermediate. Residue Lys486 participates in ATP binding. The Mg(2+) site is built by Asp716 and Asp720. Residues 772–791 (KKSIAYTLTSNIPEITPFLL) form a helical membrane-spanning segment. Topologically, residues 792-801 (FIIANIPLPL) are extracellular. Residues 802 to 822 (GTVTILCIDLGTDMVPAISLA) traverse the membrane as a helical segment. Residues 823-842 (YEAAESDIMKRQPRNPRTDK) lie on the Cytoplasmic side of the membrane. A helical transmembrane segment spans residues 843-865 (LVNERLISIAYGQIGMMQATAGF). At 866 to 917 (FTYFVILAENGFLPSTLLGIRVKWDDKYVNDLEDSYGQQWTYEQRKIVEYTC) the chain is on the extracellular side. Residues 918–937 (HTSFFASIVIVQWADLIICK) traverse the membrane as a helical segment. Over 938-950 (TRRNSIIQQGMKN) the chain is Cytoplasmic. Phosphoserine; by PKA is present on Ser942. A helical transmembrane segment spans residues 951–969 (KILIFGLFEETALAAFLSY). Residues 970-984 (CPGMDVALRMYPLKP) lie on the Extracellular side of the membrane. A helical membrane pass occupies residues 985–1005 (SWWFCAFPYSLLIFLYDEARR). Residues 1006–1022 (FILRRNPDGWVERETYY) lie on the Cytoplasmic side of the membrane.

This sequence belongs to the cation transport ATPase (P-type) (TC 3.A.3) family. Type IIC subfamily. As to quaternary structure, the sodium/potassium-transporting ATPase is composed of a catalytic alpha subunit, an auxiliary non-catalytic beta subunit and an additional regulatory subunit.

Its subcellular location is the cell membrane. It localises to the sarcolemma. The catalysed reaction is K(+)(out) + Na(+)(in) + ATP + H2O = K(+)(in) + Na(+)(out) + ADP + phosphate + H(+). Its function is as follows. This is the catalytic component of the active enzyme, which catalyzes the hydrolysis of ATP coupled with the exchange of sodium and potassium ions across the plasma membrane. This action creates the electrochemical gradient of sodium and potassium ions, providing the energy for active transport of various nutrients. This is Sodium/potassium-transporting ATPase subunit alpha-1 (atp1a1) from Anguilla anguilla (European freshwater eel).